Here is a 93-residue protein sequence, read N- to C-terminus: Mammaglobin-A (93 aa).

A signal peptide spans 1-18; the sequence is MKLLMVLMLAALSQHCYA. N53 and N68 each carry an N-linked (GlcNAc...) asparagine glycan.

It belongs to the secretoglobin family. Lipophilin subfamily. In terms of tissue distribution, mammary gland specific. Over-expressed in breast cancer.

Its subcellular location is the secreted. The chain is Mammaglobin-A (SCGB2A2) from Homo sapiens (Human).